The sequence spans 344 residues: Large ribosomal subunit protein uL3 (344 aa).

This sequence belongs to the universal ribosomal protein uL3 family. Part of the 50S ribosomal subunit. Forms a cluster with proteins L14 and L24e.

Its function is as follows. One of the primary rRNA binding proteins, it binds directly near the 3'-end of the 23S rRNA, where it nucleates assembly of the 50S subunit. The sequence is that of Large ribosomal subunit protein uL3 from Aeropyrum pernix (strain ATCC 700893 / DSM 11879 / JCM 9820 / NBRC 100138 / K1).